We begin with the raw amino-acid sequence, 484 residues long: UDP-N-acetylmuramoyl-L-alanyl-D-glutamate--2,6-diaminopimelate ligase (484 aa).

S30 is a UDP-N-acetyl-alpha-D-muramoyl-L-alanyl-D-glutamate binding site. 109 to 115 (GTNGKTS) is an ATP binding site. UDP-N-acetyl-alpha-D-muramoyl-L-alanyl-D-glutamate is bound by residues 151–152 (TT), S178, and R186. N6-carboxylysine is present on K218. Residues R379, 403–406 (DNPR), G455, and E459 contribute to the meso-2,6-diaminopimelate site. A Meso-diaminopimelate recognition motif motif is present at residues 403–406 (DNPR).

Belongs to the MurCDEF family. MurE subfamily. Requires Mg(2+) as cofactor. Post-translationally, carboxylation is probably crucial for Mg(2+) binding and, consequently, for the gamma-phosphate positioning of ATP.

It is found in the cytoplasm. It catalyses the reaction UDP-N-acetyl-alpha-D-muramoyl-L-alanyl-D-glutamate + meso-2,6-diaminopimelate + ATP = UDP-N-acetyl-alpha-D-muramoyl-L-alanyl-gamma-D-glutamyl-meso-2,6-diaminopimelate + ADP + phosphate + H(+). It functions in the pathway cell wall biogenesis; peptidoglycan biosynthesis. Functionally, catalyzes the addition of meso-diaminopimelic acid to the nucleotide precursor UDP-N-acetylmuramoyl-L-alanyl-D-glutamate (UMAG) in the biosynthesis of bacterial cell-wall peptidoglycan. This Clostridioides difficile (strain 630) (Peptoclostridium difficile) protein is UDP-N-acetylmuramoyl-L-alanyl-D-glutamate--2,6-diaminopimelate ligase.